The chain runs to 418 residues: Creatine kinase U-type, mitochondrial (418 aa).

A mitochondrion-targeting transit peptide spans 1-39 (MAGPFSRLLSARPGLKLLALAGAGSLAAGILLRPESVRA). The segment at 40-64 (ATGERRRLYPPSAEYPDLRKHNNCM) is cardiolipin-binding. The region spanning 46-132 (RLYPPSAEYP…FDPVIQERHN (87 aa)) is the Phosphagen kinase N-terminal domain. Phosphoserine is present on S152. Residues 159 to 401 (YVLSSRVRTG…NYLIDCERRL (243 aa)) enclose the Phosphagen kinase C-terminal domain. 162–166 (SSRVR) is a binding site for ATP. S197 carries the phosphoserine modification. Position 214 is a phosphothreonine (T214). H225 lines the ATP pocket. Phosphoserine is present on S233. Residues R270, R326, 354–359 (RGTGGV), and D369 each bind ATP. Phosphothreonine is present on T356.

Belongs to the ATP:guanido phosphotransferase family. Exists as an octamer composed of four MTCK homodimers. In many tissues, with highest levels in brain gut and kidney. In the kidney localized primarily in the outer medulla in the thick ascending limb and distal convoluted tubule.

It localises to the mitochondrion inner membrane. The catalysed reaction is creatine + ATP = N-phosphocreatine + ADP + H(+). Reversibly catalyzes the transfer of phosphate between ATP and various phosphogens (e.g. creatine phosphate). Creatine kinase isoenzymes play a central role in energy transduction in tissues with large, fluctuating energy demands, such as skeletal muscle, heart, brain and spermatozoa. The polypeptide is Creatine kinase U-type, mitochondrial (Ckmt1) (Rattus norvegicus (Rat)).